The chain runs to 319 residues: 12-(S)-hydroxy-5,8,10,14-eicosatetraenoic acid receptor (319 aa).

Residues 1 to 16 (MERTNCSAASTVVETA) are Extracellular-facing. Residue Asn5 is glycosylated (N-linked (GlcNAc...) asparagine). The chain crosses the membrane as a helical span at residues 17–37 (VGTMLTLECVLGLMGNAVALW). Over 38–52 (TFFYRLKVWKPYAVY) the chain is Cytoplasmic. The chain crosses the membrane as a helical span at residues 53-73 (LFNLVVADLLLATSLPFFAAF). Topologically, residues 74 to 91 (YLKGKTWKLGHMPCQVLL) are extracellular. A helical transmembrane segment spans residues 92 to 110 (FLLAFSRGVGVAFLTTVAL). Residues 111 to 131 (DRYLRVVHPRLRVNLLSLRAA) lie on the Cytoplasmic side of the membrane. The helical transmembrane segment at 132–152 (WGISSLIWLLMVVLTPQNLLT) threads the bilayer. Topologically, residues 153 to 180 (CRTTQNSTECPSFYPTGGAKAIATCQEV) are extracellular. Residues 181 to 201 (LFFLQVLLPFGLISFCNSGLI) form a helical membrane-spanning segment. Over 202–219 (RTLQKRLRESDKQPRIRR) the chain is Cytoplasmic. A helical transmembrane segment spans residues 220–240 (ARVLVAIVLLLFGLCFLPSVL). The Extracellular segment spans residues 241–265 (TRVLVHIFQEFKSCSVQQAIVRASD). A helical transmembrane segment spans residues 266-284 (IAGSLTCLHSTLSPAIYCF). Topologically, residues 285 to 319 (SNPAFTHSYRKVLKSLRGRRKAAESPSDNLRDSYS) are cytoplasmic.

Belongs to the G-protein coupled receptor 1 family. Interacts with KRAS; in a farnesylation-dependent manner.

The protein localises to the cell membrane. In terms of biological role, high-affinity receptor for 12-(S)-hydroxy-5,8,10,14-eicosatetraenoic acid (12-S-HETE), with much lower affinities for other HETE isomers. 12-S-HETE is a eicosanoid, a 12-lipoxygenase (ALOX12) metabolite of arachidonic acid, involved in many physiologic and pathologic processes, such as cell growth, adhesion, inflammation and cancer promotion. 12-S-HETE-binding leads to activation of ERK1/2 (MAPK3/MAPK1), MEK, and NF-kappa-B pathways and leads to cell growth. Plays a crucial role for proliferation, survival and macropinocytosis of KRAS-dependent cancer cells by mediating the translocation of KRAS from the endoplasmic reticulum to the plasma membrane (PM) and its association with the PM. Contributes to enhanced immune responses by inducing dendrite protrusion of small intestinal CX3CR1(+) phagocytes for the uptake of luminal antigens. Also acts as a key receptor for 12-(S)-HETE-mediated liver ischemia reperfusion injury. Its function is as follows. Proton-sensing G protein-coupled receptor. In Mus musculus (Mouse), this protein is 12-(S)-hydroxy-5,8,10,14-eicosatetraenoic acid receptor (Gpr31).